The following is a 235-amino-acid chain: Ribonuclease 3 (235 aa).

Positions 7–131 (LSALEARIGH…IIGAVFLDGG (125 aa)) constitute an RNase III domain. Glu-45 contributes to the Mg(2+) binding site. The active site involves Asp-49. Residues Asp-117 and Glu-120 each contribute to the Mg(2+) site. The active site involves Glu-120. Residues 156-225 (DPKTTLQEWA…AAAFLTREKI (70 aa)) form the DRBM domain.

Belongs to the ribonuclease III family. As to quaternary structure, homodimer. It depends on Mg(2+) as a cofactor.

The protein localises to the cytoplasm. The catalysed reaction is Endonucleolytic cleavage to 5'-phosphomonoester.. Digests double-stranded RNA. Involved in the processing of primary rRNA transcript to yield the immediate precursors to the large and small rRNAs (23S and 16S). Processes some mRNAs, and tRNAs when they are encoded in the rRNA operon. Processes pre-crRNA and tracrRNA of type II CRISPR loci if present in the organism. This Methylocella silvestris (strain DSM 15510 / CIP 108128 / LMG 27833 / NCIMB 13906 / BL2) protein is Ribonuclease 3.